Reading from the N-terminus, the 496-residue chain is Deoxyribodipyrimidine photo-lyase (496 aa).

The region spanning 28–160 is the Photolyase/cryptochrome alpha/beta domain; it reads GPVVYWMFRD…EVDAHNVVPM (133 aa). FAD-binding positions include tyrosine 256, 269 to 273, 307 to 315, and 415 to 417; these read LSGLS, ELIVRRELS, and DGR. Glutamate 307 contacts DNA.

Belongs to the DNA photolyase class-2 family. The cofactor is FAD. In terms of tissue distribution, highly expressed in flowers. Expressed in roots and stems.

It localises to the nucleus. The catalysed reaction is cyclobutadipyrimidine (in DNA) = 2 pyrimidine residues (in DNA).. In terms of biological role, involved in repair of UV radiation-induced DNA damage. Catalyzes the light-dependent monomerization (300-600 nm) of cyclobutylpyrimidine dimers (CPDs), which are formed between adjacent bases on the same DNA strand upon exposure to ultraviolet radiation. Required for plant survival in the presence of UV-B light. Not involved in the repair of (6-4) photoproducts. The chain is Deoxyribodipyrimidine photo-lyase (PHR1) from Arabidopsis thaliana (Mouse-ear cress).